Here is a 281-residue protein sequence, read N- to C-terminus: MATNFLMHEKIWFDKFKYDDAERRFYEQMNGPVTAGSRQENGASVILRDIARARENIQKSLAGSSGPGASSGPGGDHSDLIVRIASLEVENQNLRGVVQDLQQAISKLEVRLSTLEKSSPTHRATAPQTQHVSPMRQVEPPAKKGATPAEDDEDNDIDLFGSDEEEEDKEAARLREERLRQYAEKKAKKPTLVAKSSILLDVKPWDDETDMAQLETCVRSIQLDGLVWGASKLVPVGYGIRKLQIQCVVEDDKVGTDLLEEEITKFEEHVQSVDIAAFNKI.

Position 2 is an N-acetylalanine (Ala2). N6-acetyllysine is present on Lys17. 5 positions are modified to phosphoserine: Ser37, Ser44, Ser60, Ser86, and Ser106. Positions 80–115 (LIVRIASLEVENQNLRGVVQDLQQAISKLEVRLSTL) are leucine-zipper. Lys107 is modified (N6-acetyllysine). Residues 115–132 (LEKSSPTHRATAPQTQHV) are compositionally biased toward polar residues. The segment at 115–172 (LEKSSPTHRATAPQTQHVSPMRQVEPPAKKGATPAEDDEDNDIDLFGSDEEEEDKEAA) is disordered. Lys117 is modified (N6-acetyllysine; alternate). At Lys117 the chain carries N6-succinyllysine; alternate. Ser119 is subject to Phosphoserine. Thr129 carries the post-translational modification Phosphothreonine. Ser133 carries the post-translational modification Phosphoserine. Residue Thr147 is modified to Phosphothreonine. Positions 149 to 169 (AEDDEDNDIDLFGSDEEEEDK) are enriched in acidic residues. Position 162 is a phosphoserine; by CK2 (Ser162). Residues 173 to 281 (RLREERLRQY…SVDIAAFNKI (109 aa)) are catalytic (GEF).

The protein belongs to the EF-1-beta/EF-1-delta family. As to quaternary structure, EF-1 is composed of 4 subunits: alpha, beta, delta isoform 1, and gamma. Isoform 2 interacts with HSF1 and NFE2L2.

The protein resides in the nucleus. In terms of biological role, EF-1-beta and EF-1-delta stimulate the exchange of GDP bound to EF-1-alpha to GTP, regenerating EF-1-alpha for another round of transfer of aminoacyl-tRNAs to the ribosome. Functionally, regulates induction of heat-shock-responsive genes through association with heat shock transcription factors and direct DNA-binding at heat shock promoter elements (HSE). The polypeptide is Elongation factor 1-delta (Eef1d) (Rattus norvegicus (Rat)).